The primary structure comprises 327 residues: Methionyl-tRNA formyltransferase (327 aa).

111 to 114 (SLLP) lines the (6S)-5,6,7,8-tetrahydrofolate pocket.

This sequence belongs to the Fmt family.

The enzyme catalyses L-methionyl-tRNA(fMet) + (6R)-10-formyltetrahydrofolate = N-formyl-L-methionyl-tRNA(fMet) + (6S)-5,6,7,8-tetrahydrofolate + H(+). In terms of biological role, attaches a formyl group to the free amino group of methionyl-tRNA(fMet). The formyl group appears to play a dual role in the initiator identity of N-formylmethionyl-tRNA by promoting its recognition by IF2 and preventing the misappropriation of this tRNA by the elongation apparatus. The polypeptide is Methionyl-tRNA formyltransferase (Synechococcus elongatus (strain ATCC 33912 / PCC 7942 / FACHB-805) (Anacystis nidulans R2)).